A 123-amino-acid polypeptide reads, in one-letter code: Dormancy-associated protein homolog 4 (123 aa).

A disordered region spans residues 7-86 (LWDETVAGPT…NPGTPLTPGT (80 aa)). The span at 30 to 46 (LSTVRSSPPSLSSDQVT) shows a compositional bias: low complexity. Composition is skewed to polar residues over residues 47-58 (RSIMVTKGNNNV) and 71-80 (PTCSSSNPGT). The residue at position 74 (S74) is a Phosphoserine.

The protein belongs to the DRM1/ARP family.

In Arabidopsis thaliana (Mouse-ear cress), this protein is Dormancy-associated protein homolog 4.